A 268-amino-acid chain; its full sequence is Energy-coupling factor transporter transmembrane protein EcfT (268 aa).

The next 5 helical transmembrane spans lie at 26–46, 72–92, 106–126, 149–169, and 247–267; these read IVTF…TYAW, IFWL…GTPI, ILNA…STIL, IGVP…FVPL, and VAFA…TWLH.

The protein belongs to the energy-coupling factor EcfT family. Forms a stable energy-coupling factor (ECF) transporter complex composed of 2 membrane-embedded substrate-binding proteins (S component), 2 ATP-binding proteins (A component) and 2 transmembrane proteins (T component). May be able to interact with more than 1 S component at a time.

It is found in the cell membrane. Its function is as follows. Transmembrane (T) component of an energy-coupling factor (ECF) ABC-transporter complex. Unlike classic ABC transporters this ECF transporter provides the energy necessary to transport a number of different substrates. The chain is Energy-coupling factor transporter transmembrane protein EcfT from Leuconostoc gelidum subsp. gasicomitatum (strain DSM 15947 / CCUG 46042 / CECT 5767 / JCM 12535 / LMG 18811 / NBRC 113245 / TB1-10) (Leuconostoc gasicomitatum).